A 366-amino-acid chain; its full sequence is ACP-SH:acetate ligase (366 aa).

It localises to the cytoplasm. It carries out the reaction holo-[ACP] + acetate + ATP = acetyl-[ACP] + AMP + diphosphate. Acyl-carrier protein (ACP) acetate ligase of the biotin-dependent malonate decarboxylase multienzyme complex (EC 7.2.4.4). Involved in the conversion of the thiol group of the ACP-bound 2'-(5-phosphoribosyl)-3'-dephospho-CoA prosthetic group into its acetyl thioester using the energy from the hydrolysis of ATP. This chain is ACP-SH:acetate ligase (madH), found in Malonomonas rubra.